Reading from the N-terminus, the 328-residue chain is MRILSGMRPTGKLHIGHLVGALENWVKLQEEGNECFYFVADWHALTTHYDDVSKLKEYTRDLVRGFLACGIDPEKSVIFVQSGVKEHAELALLFSMIVSVSRLERVPTYKEIKSELNYKDLSTAGFLIYPVLQAADILIYKAEGVPVGEDQVYHIELTREIARRFNYLYDEVFPEPEAILSRVPKLPGTDGRKMSKSYGNIINLEISEKELEQTILRMMTDPARVRRSDPGNPENCPVWKYHQAFDISEEESKWVWEGCTTASIGCVDCKKLLLKNMKRKLAPIWENFRKIDEDPHYVDDVIMEGTKKAREVAAKTMEEVRRAMNLMF.

Residues 8 to 10 (RPT) and 16 to 17 (GH) contribute to the ATP site. Residues 9 to 17 (PTGKLHIGH) carry the 'HIGH' region motif. D136 contributes to the L-tryptophan binding site. Residues 148–150 (GED), L186, and 193–197 (KMSKS) contribute to the ATP site. Positions 193–197 (KMSKS) match the 'KMSKS' region motif.

It belongs to the class-I aminoacyl-tRNA synthetase family. In terms of assembly, homodimer.

Its subcellular location is the cytoplasm. It carries out the reaction tRNA(Trp) + L-tryptophan + ATP = L-tryptophyl-tRNA(Trp) + AMP + diphosphate + H(+). Catalyzes the attachment of tryptophan to tRNA(Trp). The chain is Tryptophan--tRNA ligase from Thermotoga maritima (strain ATCC 43589 / DSM 3109 / JCM 10099 / NBRC 100826 / MSB8).